The sequence spans 130 residues: Small ribosomal subunit protein uS8 (130 aa).

This sequence belongs to the universal ribosomal protein uS8 family. In terms of assembly, part of the 30S ribosomal subunit. Contacts proteins S5 and S12.

In terms of biological role, one of the primary rRNA binding proteins, it binds directly to 16S rRNA central domain where it helps coordinate assembly of the platform of the 30S subunit. The sequence is that of Small ribosomal subunit protein uS8 from Edwardsiella ictaluri (strain 93-146).